The chain runs to 338 residues: Deoxyhypusine hydroxylase (338 aa).

HEAT-like PBS-type repeat units lie at residues 71 to 97, 104 to 130, 200 to 233, 238 to 264, and 271 to 298; these read LKHELAYCLGQTRNPDAVAFLQQVLKD, CRHEAAEALGALGYEDSLEILKALKDD, QRYRAMFALRDLASPPDLPTAVQAVDALAKGLKD, FRHEVAFVFGQLCHPASVPSLTECLSN, and VRHEAAEALGSLGDVEGVEDTLKKFLND. Positions 73, 74, 106, and 107 each coordinate Fe cation. The Fe cation site is built by His240, Glu241, His273, and Glu274.

Belongs to the deoxyhypusine hydroxylase family. The cofactor is Fe(2+).

Its subcellular location is the cytoplasm. It localises to the nucleus. It catalyses the reaction [eIF5A protein]-deoxyhypusine + AH2 + O2 = [eIF5A protein]-hypusine + A + H2O. Its pathway is protein modification; eIF5A hypusination. In terms of biological role, catalyzes the hydroxylation of the N(6)-(4-aminobutyl)-L-lysine intermediate to form hypusine, an essential post-translational modification only found in mature eIF-5A factor. This is Deoxyhypusine hydroxylase (lia1) from Aspergillus niger (strain ATCC MYA-4892 / CBS 513.88 / FGSC A1513).